The following is a 297-amino-acid chain: Zinc finger protein 784 (297 aa).

The segment covering 1–12 has biased composition (pro residues); it reads MAAARPDPPIPS. The interval 1 to 39 is disordered; sequence MAAARPDPPIPSSPTRESPSPEPPDLVLVPDGRPVTPPG. Ser-13 is subject to Phosphoserine. C2H2-type zinc fingers lie at residues 64 to 86, 100 to 122, and 128 to 150; these read FHCA…EHGH, SRCH…YSLH, and YRCS…QHRH. The interval 149–175 is disordered; it reads RHGVEPGTSERLLPTTTTGQPNSRVAQ. The span at 162-173 shows a compositional bias: polar residues; sequence PTTTTGQPNSRV. 3 consecutive C2H2-type zinc fingers follow at residues 195–217, 223–245, and 251–273; these read FACR…ERVH, YHCS…ARIH, and FRCM…QRTH. The disordered stretch occupies residues 268–297; sequence KHQRTHFHGPGSGVGESRGQLRSSSVSQES. The segment covering 287–297 has biased composition (polar residues); the sequence is QLRSSSVSQES.

Belongs to the krueppel C2H2-type zinc-finger protein family.

The protein resides in the nucleus. Its function is as follows. May be involved in transcriptional regulation. The protein is Zinc finger protein 784 (Znf784) of Mus musculus (Mouse).